The primary structure comprises 218 residues: Glutathione S-transferase Mu 2 (218 aa).

A GST N-terminal domain is found at 2 to 88; it reads PIILGYWNIR…YIARKHNLCG (87 aa). 7 to 8 provides a ligand contact to glutathione; that stretch reads YW. A phosphoserine mark is found at Ser-27 and Ser-44. Glutathione-binding positions include 43–46, Lys-50, 59–60, and 72–73; these read RSQW, NL, and QS. The 119-residue stretch at 90-208 folds into the GST C-terminal domain; sequence TEKEKIQEDI…KSSRFLPRPV (119 aa). Tyr-116 contacts substrate.

Belongs to the GST superfamily. Mu family. In terms of assembly, homodimer.

Its subcellular location is the cytoplasm. It carries out the reaction RX + glutathione = an S-substituted glutathione + a halide anion + H(+). The enzyme catalyses 11(S)-hydroxy-14(S),15(S)-epoxy-(5Z,8Z,12E)-eicosatrienoate + glutathione = (11S,15S)-dihydroxy-14(R)-S-glutathionyl-(5Z,8Z,12E)-eicosatrienoate. Functionally, conjugation of reduced glutathione to a wide number of exogenous and endogenous hydrophobic electrophiles. Participates in the formation of novel hepoxilin regioisomers. In Pongo abelii (Sumatran orangutan), this protein is Glutathione S-transferase Mu 2 (GSTM2).